Here is a 446-residue protein sequence, read N- to C-terminus: Tol-Pal system protein TolB (446 aa).

The first 43 residues, 1–43 (MRKLWAPNWLSRRQNANPTRDQSRHALMAWLAAALMSAGAAHA), serve as a signal peptide directing secretion.

The protein belongs to the TolB family. As to quaternary structure, the Tol-Pal system is composed of five core proteins: the inner membrane proteins TolA, TolQ and TolR, the periplasmic protein TolB and the outer membrane protein Pal. They form a network linking the inner and outer membranes and the peptidoglycan layer.

The protein localises to the periplasm. In terms of biological role, part of the Tol-Pal system, which plays a role in outer membrane invagination during cell division and is important for maintaining outer membrane integrity. The polypeptide is Tol-Pal system protein TolB (Cupriavidus metallidurans (strain ATCC 43123 / DSM 2839 / NBRC 102507 / CH34) (Ralstonia metallidurans)).